We begin with the raw amino-acid sequence, 163 residues long: NADH-quinone oxidoreductase subunit I (163 aa).

2 4Fe-4S ferredoxin-type domains span residues 54–84 and 94–123; these read LRRY…IDSA and TRYD…ETHI. [4Fe-4S] cluster-binding residues include C64, C67, C70, C74, C103, C106, C109, and C113.

Belongs to the complex I 23 kDa subunit family. In terms of assembly, NDH-1 is composed of 14 different subunits. Subunits NuoA, H, J, K, L, M, N constitute the membrane sector of the complex. [4Fe-4S] cluster serves as cofactor.

Its subcellular location is the cell inner membrane. The enzyme catalyses a quinone + NADH + 5 H(+)(in) = a quinol + NAD(+) + 4 H(+)(out). Its function is as follows. NDH-1 shuttles electrons from NADH, via FMN and iron-sulfur (Fe-S) centers, to quinones in the respiratory chain. The immediate electron acceptor for the enzyme in this species is believed to be ubiquinone. Couples the redox reaction to proton translocation (for every two electrons transferred, four hydrogen ions are translocated across the cytoplasmic membrane), and thus conserves the redox energy in a proton gradient. The sequence is that of NADH-quinone oxidoreductase subunit I from Xylella fastidiosa (strain 9a5c).